Here is a 443-residue protein sequence, read N- to C-terminus: Chromosomal replication initiator protein DnaA (443 aa).

The interval 1–76 (METKALWEKL…KSVLNSYVSV (76 aa)) is domain I, interacts with DnaA modulators. The segment at 76 to 99 (VDFLTKEIFEKNTKKENKKEPINT) is domain II. The interval 100-320 (VLSENALTFE…GLVNRLLFFG (221 aa)) is domain III, AAA+ region. ATP-binding residues include Gly145, Gly147, Lys148, and Thr149. A domain IV, binds dsDNA region spans residues 321 to 443 (IQNDLGHIID…ESLKNEIIGK (123 aa)).

The protein belongs to the DnaA family. In terms of assembly, oligomerizes as a right-handed, spiral filament on DNA at oriC.

It is found in the cytoplasm. Functionally, plays an essential role in the initiation and regulation of chromosomal replication. ATP-DnaA binds to the origin of replication (oriC) to initiate formation of the DNA replication initiation complex once per cell cycle. Binds the DnaA box (a 9 base pair repeat at the origin) and separates the double-stranded (ds)DNA. Forms a right-handed helical filament on oriC DNA; dsDNA binds to the exterior of the filament while single-stranded (ss)DNA is stabiized in the filament's interior. The ATP-DnaA-oriC complex binds and stabilizes one strand of the AT-rich DNA unwinding element (DUE), permitting loading of DNA polymerase. After initiation quickly degrades to an ADP-DnaA complex that is not apt for DNA replication. Binds acidic phospholipids. This is Chromosomal replication initiator protein DnaA from Mesoplasma florum (strain ATCC 33453 / NBRC 100688 / NCTC 11704 / L1) (Acholeplasma florum).